We begin with the raw amino-acid sequence, 384 residues long: Odorant receptor 33c (384 aa).

Residues 1 to 35 (MVIIDSLSFYRPFWICMRLLVPTFFKDSSRPVQLY) are Cytoplasmic-facing. A helical membrane pass occupies residues 36-56 (VVLLHILVTLWFPLHLLLHLL). Residues 57 to 63 (LLPSTAE) are Extracellular-facing. A helical membrane pass occupies residues 64–84 (FFKNLTMSLTCVACSLKHVAH). Topologically, residues 85 to 128 (LYHLPQIVEIESLIEQLDTFIASEQEHRYYRDHVHCHARRFTRC) are cytoplasmic. The chain crosses the membrane as a helical span at residues 129-149 (LYISFGMIYALFLFGVFVQVI). Residues 150 to 169 (SGNWELLYPAYFPFDLESNR) are Extracellular-facing. Residues 170 to 190 (FLGAVALGYQVFSMLVEGFQG) traverse the membrane as a helical segment. Over 191–251 (LGNDTYTPLT…LVRFHNLVSR (61 aa)) the chain is Cytoplasmic. Residues 252 to 272 (TISEVQLVQLGGCGATLCIIV) traverse the membrane as a helical segment. Topologically, residues 273–274 (SY) are extracellular. The helical transmembrane segment at 275–295 (MLFFVGDTISLVYYLVFFGVV) threads the bilayer. The Cytoplasmic portion of the chain corresponds to 296-358 (CVQLFPSCYF…WIIKAGGLIE (63 aa)). Residues 359 to 379 (LNLNAFFATLKMAYSLFAVVV) form a helical membrane-spanning segment. At 380 to 384 (RAKGI) the chain is on the extracellular side.

Belongs to the insect chemoreceptor superfamily. Heteromeric odorant receptor channel (TC 1.A.69) family. Or2a subfamily. Interacts with Orco. Complexes exist early in the endomembrane system in olfactory sensory neurons (OSNs), coupling these complexes to the conserved ciliary trafficking pathway. In terms of tissue distribution, expressed in the antenna and in a subset of 18 olfactory receptor neurons in the maxillary palp.

Its subcellular location is the cell membrane. Odorant receptor which mediates acceptance or avoidance behavior, depending on its substrates. The odorant receptor repertoire encodes a large collection of odor stimuli that vary widely in identity, intensity, and duration. May form a complex with Orco to form odorant-sensing units, providing sensitive and prolonged odorant signaling and calcium permeability. This Drosophila melanogaster (Fruit fly) protein is Odorant receptor 33c (Or33c).